Consider the following 184-residue polypeptide: ADP-ribosylation factor-like protein 2 (184 aa).

Residue G2 is the site of N-myristoyl glycine attachment. GTP-binding positions include G23 to T30, D66 to Q70, G68, and N125 to D128.

Belongs to the small GTPase superfamily. Arf family. As to expression, in the embryo, strongly expressed in migrating hypodermal cells. Shortly before the beginning of elongation, expressed in many developing neurons where it persists throughout adulthood. In the larva, highly expressed in migrating hypodermal cells and the uterus. Also expressed in vulva, spermatheca, sheath cells, distal tips cells and proctoderm of the male tail.

The protein resides in the cytoplasm. It is found in the cell membrane. It localises to the cytoskeleton. Its subcellular location is the microtubule organizing center. The protein localises to the centrosome. Its function is as follows. GTP-binding protein that functions in embryogenesis, cytokinesis, germline development and microtubulule cytoskeleton dynamics. This chain is ADP-ribosylation factor-like protein 2 (evl-20), found in Caenorhabditis elegans.